A 122-amino-acid chain; its full sequence is NADH-quinone oxidoreductase subunit A (122 aa).

3 helical membrane-spanning segments follow: residues Ile-12–Leu-32, Ile-67–Val-87, and Ile-91–Ile-111.

Belongs to the complex I subunit 3 family. In terms of assembly, NDH-1 is composed of 14 different subunits. Subunits NuoA, H, J, K, L, M, N constitute the membrane sector of the complex.

Its subcellular location is the cell inner membrane. The catalysed reaction is a quinone + NADH + 5 H(+)(in) = a quinol + NAD(+) + 4 H(+)(out). Its function is as follows. NDH-1 shuttles electrons from NADH, via FMN and iron-sulfur (Fe-S) centers, to quinones in the respiratory chain. The immediate electron acceptor for the enzyme in this species is believed to be ubiquinone. Couples the redox reaction to proton translocation (for every two electrons transferred, four hydrogen ions are translocated across the cytoplasmic membrane), and thus conserves the redox energy in a proton gradient. This is NADH-quinone oxidoreductase subunit A from Nitrosomonas europaea (strain ATCC 19718 / CIP 103999 / KCTC 2705 / NBRC 14298).